The sequence spans 476 residues: 3-isopropylmalate dehydratase large subunit (476 aa).

3 residues coordinate [4Fe-4S] cluster: cysteine 353, cysteine 413, and cysteine 416.

It belongs to the aconitase/IPM isomerase family. LeuC type 1 subfamily. As to quaternary structure, heterodimer of LeuC and LeuD. The cofactor is [4Fe-4S] cluster.

The catalysed reaction is (2R,3S)-3-isopropylmalate = (2S)-2-isopropylmalate. It functions in the pathway amino-acid biosynthesis; L-leucine biosynthesis; L-leucine from 3-methyl-2-oxobutanoate: step 2/4. Its function is as follows. Catalyzes the isomerization between 2-isopropylmalate and 3-isopropylmalate, via the formation of 2-isopropylmaleate. In Yersinia pseudotuberculosis serotype O:1b (strain IP 31758), this protein is 3-isopropylmalate dehydratase large subunit.